The following is a 160-amino-acid chain: Epithelial membrane protein 1 (160 aa).

A helical membrane pass occupies residues 1-21 (MLVLLAGLFVVHIATAIMLFV). N-linked (GlcNAc...) asparagine glycans are attached at residues asparagine 35 and asparagine 43. The next 2 membrane-spanning stretches (helical) occupy residues 67–87 (FMIL…FQLF) and 95–115 (FFLS…GVSI). N-linked (GlcNAc...) asparagine glycosylation is present at asparagine 128. The helical transmembrane segment at 137–157 (FILTWICFCFSFIIGILYMVL) threads the bilayer.

Belongs to the PMP-22/EMP/MP20 family.

The protein resides in the membrane. In Mus musculus (Mouse), this protein is Epithelial membrane protein 1 (Emp1).